Here is a 210-residue protein sequence, read N- to C-terminus: Dephospho-CoA kinase (210 aa).

One can recognise a DPCK domain in the interval 18–210 (RIGITGGIAS…LSYPQVEVLL (193 aa)). 26 to 31 (ASGKTS) is an ATP binding site.

It belongs to the CoaE family.

The protein localises to the cytoplasm. It catalyses the reaction 3'-dephospho-CoA + ATP = ADP + CoA + H(+). It functions in the pathway cofactor biosynthesis; coenzyme A biosynthesis; CoA from (R)-pantothenate: step 5/5. Catalyzes the phosphorylation of the 3'-hydroxyl group of dephosphocoenzyme A to form coenzyme A. The chain is Dephospho-CoA kinase from Prochlorococcus marinus (strain SARG / CCMP1375 / SS120).